A 672-amino-acid chain; its full sequence is Flap endonuclease 1 (672 aa).

The N-domain stretch occupies residues 1 to 106 (MGIKGLIGFL…QTLAKRKLLR (106 aa)). Aspartate 34 contacts Mg(2+). Residues arginine 47 and arginine 72 each coordinate DNA. Mg(2+) contacts are provided by aspartate 88, glutamate 160, glutamate 162, aspartate 181, and aspartate 183. An I-domain region spans residues 124 to 252 (AIRKYVGRTV…KTAYNLIKKH (129 aa)). Glutamate 160 lines the DNA pocket. DNA contacts are provided by glycine 230 and aspartate 232. Aspartate 232 is a Mg(2+) binding site. Positions 327-335 (TQLSLKSFF) are interaction with PCNA. Residues 361-436 (VESAVDSTSD…DAKKRNKRVP (76 aa)) form a disordered region. Over residues 370 to 382 (DDGKDEVPSDDKV) the composition is skewed to basic and acidic residues.

Belongs to the XPG/RAD2 endonuclease family. FEN1 subfamily. Interacts with PCNA. Three molecules of FEN1 bind to one PCNA trimer with each molecule binding to one PCNA monomer. PCNA stimulates the nuclease activity without altering cleavage specificity. Requires Mg(2+) as cofactor. Phosphorylated. Phosphorylation upon DNA damage induces relocalization to the nuclear plasma.

The protein localises to the nucleus. It is found in the nucleolus. Its subcellular location is the nucleoplasm. It localises to the mitochondrion. Its function is as follows. Structure-specific nuclease with 5'-flap endonuclease and 5'-3' exonuclease activities involved in DNA replication and repair. During DNA replication, cleaves the 5'-overhanging flap structure that is generated by displacement synthesis when DNA polymerase encounters the 5'-end of a downstream Okazaki fragment. It enters the flap from the 5'-end and then tracks to cleave the flap base, leaving a nick for ligation. Also involved in the long patch base excision repair (LP-BER) pathway, by cleaving within the apurinic/apyrimidinic (AP) site-terminated flap. Acts as a genome stabilization factor that prevents flaps from equilibrating into structures that lead to duplications and deletions. Also possesses 5'-3' exonuclease activity on nicked or gapped double-stranded DNA, and exhibits RNase H activity. Also involved in replication and repair of rDNA and in repairing mitochondrial DNA. In Babesia bovis, this protein is Flap endonuclease 1.